The sequence spans 182 residues: UPF0397 protein SAG1634 (182 aa).

5 helical membrane passes run 9-29 (VVAT…VNIP), 42-62 (AVLA…TGFI), 74-94 (SPWW…GFFA), 109-129 (LLLF…VVAP), and 148-168 (FLSS…LLLA).

This sequence belongs to the UPF0397 family.

It localises to the cell membrane. The chain is UPF0397 protein SAG1634 from Streptococcus agalactiae serotype V (strain ATCC BAA-611 / 2603 V/R).